The following is a 408-amino-acid chain: Putative mannan endo-1,4-beta-mannosidase 4 (408 aa).

Residues 1–23 (MKCLCFIVLLAIVIAQSYVGVEA) form the signal peptide. A glycan (N-linked (GlcNAc...) asparagine) is linked at asparagine 73. Positions 85 and 201 each coordinate substrate. Glutamate 202 functions as the Proton donor in the catalytic mechanism. Residue glutamate 322 is the Nucleophile of the active site. Residue tryptophan 364 participates in substrate binding.

This sequence belongs to the glycosyl hydrolase 5 (cellulase A) family.

Its subcellular location is the secreted. It carries out the reaction Random hydrolysis of (1-&gt;4)-beta-D-mannosidic linkages in mannans, galactomannans and glucomannans.. The polypeptide is Putative mannan endo-1,4-beta-mannosidase 4 (MAN4) (Arabidopsis thaliana (Mouse-ear cress)).